Consider the following 617-residue polypeptide: Dihydroxy-acid dehydratase (617 aa).

Residue aspartate 81 participates in Mg(2+) binding. Cysteine 122 is a [2Fe-2S] cluster binding site. Mg(2+) contacts are provided by aspartate 123 and lysine 124. At lysine 124 the chain carries N6-carboxylysine. Cysteine 195 contributes to the [2Fe-2S] cluster binding site. Glutamate 492 is a Mg(2+) binding site. Catalysis depends on serine 518, which acts as the Proton acceptor.

It belongs to the IlvD/Edd family. As to quaternary structure, homodimer. Requires [2Fe-2S] cluster as cofactor. It depends on Mg(2+) as a cofactor.

The catalysed reaction is (2R)-2,3-dihydroxy-3-methylbutanoate = 3-methyl-2-oxobutanoate + H2O. It catalyses the reaction (2R,3R)-2,3-dihydroxy-3-methylpentanoate = (S)-3-methyl-2-oxopentanoate + H2O. Its pathway is amino-acid biosynthesis; L-isoleucine biosynthesis; L-isoleucine from 2-oxobutanoate: step 3/4. The protein operates within amino-acid biosynthesis; L-valine biosynthesis; L-valine from pyruvate: step 3/4. Functionally, functions in the biosynthesis of branched-chain amino acids. Catalyzes the dehydration of (2R,3R)-2,3-dihydroxy-3-methylpentanoate (2,3-dihydroxy-3-methylvalerate) into 2-oxo-3-methylpentanoate (2-oxo-3-methylvalerate) and of (2R)-2,3-dihydroxy-3-methylbutanoate (2,3-dihydroxyisovalerate) into 2-oxo-3-methylbutanoate (2-oxoisovalerate), the penultimate precursor to L-isoleucine and L-valine, respectively. The sequence is that of Dihydroxy-acid dehydratase from Azorhizobium caulinodans (strain ATCC 43989 / DSM 5975 / JCM 20966 / LMG 6465 / NBRC 14845 / NCIMB 13405 / ORS 571).